Consider the following 397-residue polypeptide: Protein WRKY1 (397 aa).

A DNA-binding region (WRKY) is located at residues 326-392 (KVADIPADEF…YEGDHNHNRV (67 aa)).

This sequence belongs to the WRKY group II-d family. As to quaternary structure, interacts with RS2. In terms of tissue distribution, more abundant in apices and young leaf primordia than in fully expanded leaf tissues.

It is found in the nucleus. In terms of biological role, transcription factor. Interacts specifically with the W box (5'-(T)TGAC[CT]-3'), a frequently occurring elicitor-responsive cis-acting element. The sequence is that of Protein WRKY1 from Zea mays (Maize).